The sequence spans 184 residues: uncharacterized protein (184 aa).

Belongs to the PhzF family.

It is found in the cytoplasm. The protein resides in the nucleus. This is an uncharacterized protein from Schizosaccharomyces pombe (strain 972 / ATCC 24843) (Fission yeast).